Consider the following 82-residue polypeptide: uncharacterized protein (82 aa).

The protein belongs to the chlamydial CPn_0711/CT_665/TC_0036 family.

This is an uncharacterized protein from Chlamydia pneumoniae (Chlamydophila pneumoniae).